A 672-amino-acid chain; its full sequence is Transmembrane 9 superfamily member 2 (672 aa).

The N-terminal stretch at 1-18 (MKRGVWLLIYCYATLTKG) is a signal peptide. The Extracellular portion of the chain corresponds to 19–307 (FSLPGLSPTT…DKYLHIYDPQ (289 aa)). A helical membrane pass occupies residues 308 to 328 (IQWFSLINFSVIVILLSSVVM). The Cytoplasmic segment spans residues 329 to 383 (HSLLRALKSDLARYNELNLDNEFHEDSGWKLGHGDVFRTPSKSMLLSILVGSGMQ). Residues 384–404 (LFLMVMCSIFFAAVGLVSPVS) traverse the membrane as a helical segment. The Extracellular portion of the chain corresponds to 405–410 (RGSLPT). A helical transmembrane segment spans residues 411–431 (VMFVLYALFGFVGSYASMGVY). Over 432–447 (KFFRGPYWKANMILTP) the chain is Cytoplasmic. Residues 448–468 (ILLPGAIFLLIVIMNFFLLFA) form a helical membrane-spanning segment. At 469–479 (HSSGVIPARSL) the chain is on the extracellular side. A helical membrane pass occupies residues 480-500 (FFIILLWFLVSVPLSFAGSIV). Over 501 to 532 (AHKQCNWDEHPTKTNQIARQIPYQPWYLRTAQ) the chain is Cytoplasmic. The chain crosses the membrane as a helical span at residues 533 to 553 (ATLIAGIFSFGSIAVELYFIY). The Extracellular portion of the chain corresponds to 554–565 (SSLWFNKIFYMF). Residues 566-586 (GFLLFSFLLLTLTTSLVTILI) form a helical membrane-spanning segment. Residues 587 to 601 (TYYSLCLENWLWQWR) lie on the Cytoplasmic side of the membrane. A helical transmembrane segment spans residues 602 to 622 (SFIIGGLGCSIYTFIHSILFT). The Extracellular segment spans residues 623-628 (KFKLGG). The chain crosses the membrane as a helical span at residues 629 to 649 (VITVVLYLGYSLIISALCCVV). Over 650–672 (TGAIGFFSSMFFIRKIYSAIKVE) the chain is Cytoplasmic.

Belongs to the nonaspanin (TM9SF) (TC 9.A.2) family.

It localises to the vacuole membrane. In terms of biological role, with EMP70 and TMN3, plays a critical role in the late stages of a nutrient-controlled pathway notably regulating FLO11 gene expression. Acts downstream of RAS2 and TOR. Essential for cell adhesion and filamentous growth. May play a role as effector of cellular copper homeostasis. The sequence is that of Transmembrane 9 superfamily member 2 (TMN2) from Saccharomyces cerevisiae (strain ATCC 204508 / S288c) (Baker's yeast).